Reading from the N-terminus, the 357-residue chain is Peptide chain release factor 1 (357 aa).

Glutamine 234 bears the N5-methylglutamine mark.

It belongs to the prokaryotic/mitochondrial release factor family. Methylated by PrmC. Methylation increases the termination efficiency of RF1.

Its subcellular location is the cytoplasm. Functionally, peptide chain release factor 1 directs the termination of translation in response to the peptide chain termination codons UAG and UAA. This Lactococcus lactis subsp. cremoris (strain MG1363) protein is Peptide chain release factor 1.